The sequence spans 185 residues: Ribosome-recycling factor (185 aa).

Residues 138 to 160 (AMDKAVKDGEVGEDEGARGEKEL) form a disordered region.

The protein belongs to the RRF family.

Its subcellular location is the cytoplasm. Functionally, responsible for the release of ribosomes from messenger RNA at the termination of protein biosynthesis. May increase the efficiency of translation by recycling ribosomes from one round of translation to another. This Micrococcus luteus (strain ATCC 4698 / DSM 20030 / JCM 1464 / CCM 169 / CCUG 5858 / IAM 1056 / NBRC 3333 / NCIMB 9278 / NCTC 2665 / VKM Ac-2230) (Micrococcus lysodeikticus) protein is Ribosome-recycling factor.